The sequence spans 359 residues: Protein RecA (359 aa).

77 to 84 (GPESSGKT) is a binding site for ATP.

This sequence belongs to the RecA family.

It localises to the cytoplasm. In terms of biological role, can catalyze the hydrolysis of ATP in the presence of single-stranded DNA, the ATP-dependent uptake of single-stranded DNA by duplex DNA, and the ATP-dependent hybridization of homologous single-stranded DNAs. It interacts with LexA causing its activation and leading to its autocatalytic cleavage. This Azospirillum lipoferum (strain 4B) protein is Protein RecA.